The chain runs to 361 residues: Histidine biosynthesis bifunctional protein HisB (361 aa).

The histidinol-phosphatase stretch occupies residues 1–172 (MSQPTLFIDR…PKTTACERPP (172 aa)). Asp9 functions as the Nucleophile in the catalytic mechanism. Mg(2+)-binding residues include Asp9 and Asp11. The active-site Proton donor is Asp11. Residues Cys92, His94, Cys100, and Cys102 each contribute to the Zn(2+) site. Asp129 lines the Mg(2+) pocket. An imidazoleglycerol-phosphate dehydratase region spans residues 173-361 (RYAEVVRTTK…NELPSSKGVL (189 aa)).

This sequence in the N-terminal section; belongs to the histidinol-phosphatase family. In the C-terminal section; belongs to the imidazoleglycerol-phosphate dehydratase family. The cofactor is Mg(2+). Requires Zn(2+) as cofactor.

Its subcellular location is the cytoplasm. The enzyme catalyses D-erythro-1-(imidazol-4-yl)glycerol 3-phosphate = 3-(imidazol-4-yl)-2-oxopropyl phosphate + H2O. The catalysed reaction is L-histidinol phosphate + H2O = L-histidinol + phosphate. It participates in amino-acid biosynthesis; L-histidine biosynthesis; L-histidine from 5-phospho-alpha-D-ribose 1-diphosphate: step 6/9. The protein operates within amino-acid biosynthesis; L-histidine biosynthesis; L-histidine from 5-phospho-alpha-D-ribose 1-diphosphate: step 8/9. The polypeptide is Histidine biosynthesis bifunctional protein HisB (Actinobacillus pleuropneumoniae serotype 7 (strain AP76)).